A 147-amino-acid chain; its full sequence is Hemoglobin subunit beta-1 (147 aa).

The Globin domain occupies 3–147 (EWTDKERSII…VVSALGKQYH (145 aa)). 2 residues coordinate heme b: His64 and His93.

It belongs to the globin family. In terms of assembly, heterotetramer of two alpha chains and two beta chains. As to expression, red blood cells.

Involved in oxygen transport from gills to the various peripheral tissues. The protein is Hemoglobin subunit beta-1 (hbb1) of Pagothenia borchgrevinki (Bald rockcod).